The following is a 190-amino-acid chain: MAKSEAPINLTNQFLIAMPGMADPTFSGSVVYLCEHNERGALGLVINRPIDIDMATLFDKIDLKLEIQPVAHQPVYFGGPVQTERGFVLHDPVGIYVSSLAVPGGLEMTTSKDVLEAVANGSGPHRFLLTLGYSGWGAGQLEDELSRNGWLTVQADPEIIFSVPPEERFSAAIRLLGIDITMLSGEAGHA.

This sequence belongs to the UPF0301 (AlgH) family.

This Cupriavidus pinatubonensis (strain JMP 134 / LMG 1197) (Cupriavidus necator (strain JMP 134)) protein is UPF0301 protein Reut_A0705.